Here is a 166-residue protein sequence, read N- to C-terminus: Large ribosomal subunit protein uL10 (166 aa).

This sequence belongs to the universal ribosomal protein uL10 family. Part of the ribosomal stalk of the 50S ribosomal subunit. The N-terminus interacts with L11 and the large rRNA to form the base of the stalk. The C-terminus forms an elongated spine to which L12 dimers bind in a sequential fashion forming a multimeric L10(L12)X complex.

In terms of biological role, forms part of the ribosomal stalk, playing a central role in the interaction of the ribosome with GTP-bound translation factors. The chain is Large ribosomal subunit protein uL10 from Bacillus cereus (strain G9842).